A 372-amino-acid chain; its full sequence is MALNDFHVSEPYTLGIELEMQVINPPGYDLSQDSSTLIDAVKPQLTAGEIKHDITESMLEMATGVCRDIDQAAAQLSAMQHVILQAASEHHLGICGGGTHPFQKWQRQEVCDNERYQRTLENFGYLIQQATVFGQHVHVGCANGDDAIYLLHGLSHFVPHFIALSAASPYMQGSDTRFACARLNIFSAFPDNGPMPWVSNWQEFAGLFRRLSYTTMIDSIKDLHWDIRPSPAFGTVEVRVMDTPLTLDHAINMAGLIQATAHWLLTERPFKPQEQDYLLYKFNRFQACRYGLEGVLTDVYTGDRRRLADDTLRLLDNVTPSARKLGADSAIDALRLQVKKGGNEAQYMREFIADGGSLIGLVQKHCEIWTGQ.

Belongs to the glutamate--cysteine ligase type 2 family. YbdK subfamily. As to quaternary structure, homodimer.

It carries out the reaction L-cysteine + L-glutamate + ATP = gamma-L-glutamyl-L-cysteine + ADP + phosphate + H(+). Functionally, ATP-dependent carboxylate-amine ligase which exhibits weak glutamate--cysteine ligase activity. The protein is Putative glutamate--cysteine ligase 2 (ybdK) of Salmonella agona (strain SL483).